The following is a 520-amino-acid chain: MLGKHSKIFFGVSLIFLVIAIVLASWGFQKIVNKQIQKNVQLANDSKMFERWVKLPMPLDFKVYVFNVTNVEEVNQGGKPILQEIGPYVYKQYREKTILGYGDNDTIKYMLKKHFEFDPEASGSLTEDDELTVVHFSYLAALLTVHDMMPSLVTVVNKALEQLFPSLEDAFLRVKVRDLFFDGIYLSCDGDNSALGLVCGKIRAEMPPTMRKAEGSNGFYFSMFSHMNRSESGPYEMIRGRDNVYELGNIVSYKGQENMPMWGDKYCGQINGSDSSIFPPIKEDDVPKKIYTFEPDICRSVYADLVDKRELFNISTYYYEISETAFAAKSANPNNRCFCKKNWSANHDGCLLMGLLNLTPCQGAPAIASLPHFYLGSEELLDYFQSGVQPDKEKHNTYVYIDPVTGVVLSGVKRLQFNIEMRQINNIPQLKSVPTGLFPMLWLEEGATIPESIQQELRDSHKLLGYVEVAKWFLLTIAIISVIASAVAVARANALLSWPRNSNSVSFILGPSVTQVNKGN.

Residues 1-7 (MLGKHSK) lie on the Cytoplasmic side of the membrane. Residues 8-28 (IFFGVSLIFLVIAIVLASWGF) form a helical membrane-spanning segment. Residues 29 to 468 (QKIVNKQIQK…DSHKLLGYVE (440 aa)) are Extracellular-facing. N-linked (GlcNAc...) asparagine glycosylation is found at Asn44, Asn67, Asn104, Asn228, Asn271, Asn313, and Asn342. 3 cysteine pairs are disulfide-bonded: Cys267–Cys337, Cys298–Cys361, and Cys339–Cys350. The chain crosses the membrane as a helical span at residues 469–489 (VAKWFLLTIAIISVIASAVAV). At 490–520 (ARANALLSWPRNSNSVSFILGPSVTQVNKGN) the chain is on the cytoplasmic side.

It belongs to the CD36 family. As to expression, localizes to cells surrounding the sensory neurons in the antenna. Associate in a ratio of 2:1 with the neurons expressing the other subtype SNMP1.

It is found in the cell membrane. Plays an olfactory role that is not restricted to pheromone sensitivity. May play a role in the elimination of lipophilic components from the sensillum lymph. This chain is Sensory neuron membrane protein 2, found in Heliothis virescens (Tobacco budworm moth).